A 307-amino-acid chain; its full sequence is uncharacterized protein (307 aa).

This is an uncharacterized protein from Bacillus subtilis (strain 168).